The following is a 319-amino-acid chain: Succinoglycan biosynthesis protein ExoW (319 aa).

The protein belongs to the glycosyltransferase 2 family.

The protein resides in the cell membrane. The protein operates within glycan metabolism; exopolysaccharide biosynthesis. In terms of biological role, glycosyltransferase required for the synthesis of succinoglycan (EPS I). Needed for the addition of the seventh sugar (glucose), catalyzes the formation of a beta-1,3 linkage between the seventh and eighth sugar. In Rhizobium meliloti (strain 1021) (Ensifer meliloti), this protein is Succinoglycan biosynthesis protein ExoW (exoW).